Reading from the N-terminus, the 379-residue chain is ATP-sensitive inward rectifier potassium channel 10 (379 aa).

Topologically, residues Met-1–Asp-61 are cytoplasmic. Arg-36 lines the 1,2-dioctanoyl-sn-glycero-3-phospho-(1D-myo-inositol-4,5-bisphosphate) pocket. Residues Met-62–Leu-88 traverse the membrane as a helical segment. Residues Val-89–Thr-114 are Extracellular-facing. Cys-108 and Cys-140 are disulfide-bonded. The segment at residues Leu-115 to Tyr-131 is an intramembrane region (discontinuously helical; Pore-forming). The Selectivity filter signature appears at Thr-128–Phe-133. Over Gly-132–Cys-140 the chain is Extracellular. A helical membrane pass occupies residues Pro-141–Leu-166. The Cytoplasmic portion of the chain corresponds to Ala-167 to Val-379. 1,2-dioctanoyl-sn-glycero-3-phospho-(1D-myo-inositol-4,5-bisphosphate) contacts are provided by Lys-168, Arg-171, and Lys-173. Residue Gly-210–Leu-217 participates in ATP binding.

This sequence belongs to the inward rectifier-type potassium channel (TC 1.A.2.1) family. KCNJ10 subfamily. In terms of assembly, homotetramer. In kidney cells, it forms heteromeric channels with Kir5.1/KCNJ16; this interaction is required for KCNJ16 localization to the basolateral membrane. Interacts with MAGI1, alone and possibly as a heteromer with KCNJ16; this interaction may facilitate KCNJ10/KCNJ16 potassium channel expression at the basolateral membrane in kidney cells. Interacts with PATJ. As to expression, predominantly expressed in the brain, including in glial cells of the cerebellum and forebrain. Expressed at lower levels in the kidney, and other peripheral tissues.

The protein resides in the membrane. It is found in the basolateral cell membrane. It catalyses the reaction K(+)(in) = K(+)(out). With respect to regulation, channel activity is strongly regulated by variations of cytosolic pH; channels are activated by alkaline and inhibited by acidic pH values. Activated by phosphatidylinositol 4,5 biphosphate (PtdIns(4,5)P2). Inhibited by Ba(2+) and Cs(+). Functionally, may be responsible for potassium buffering action of glial cells in the brain. Inward rectifier potassium channels are characterized by a greater tendency to allow potassium to flow into the cell rather than out of it. Their voltage dependence is regulated by the concentration of extracellular potassium; as external potassium is raised, the voltage range of the channel opening shifts to more positive voltages. The inward rectification is mainly due to the blockage of outward current by internal magnesium. Can be blocked by extracellular barium and cesium. In the kidney, together with KCNJ16, mediates basolateral K(+) recycling in distal tubules; this process is critical for Na(+) reabsorption at the tubules. In Rattus norvegicus (Rat), this protein is ATP-sensitive inward rectifier potassium channel 10.